The following is a 925-amino-acid chain: Glutamate receptor 3.1 (925 aa).

The signal sequence occupies residues 1-25 (MLSSMNWVLLSFIIVLGGGLLLSEG). Residues 26-591 (ASSSRPPVIK…NPWAFLRPFT (566 aa)) are Extracellular-facing. N-linked (GlcNAc...) asparagine glycans are attached at residues Asn-309, Asn-341, Asn-359, Asn-419, Asn-437, and Asn-488. A helical transmembrane segment spans residues 592–612 (LPMWAVTASFFVIVGAAIWIL). Residues 613 to 621 (EHRINDEFR) are Cytoplasmic-facing. Residues 622-642 (GPPRRQIITILWFTFSTMFFS) traverse the membrane as a helical segment. The Cytoplasmic segment spans residues 643–653 (HRETTVSTLGR). A helical transmembrane segment spans residues 654–674 (MVLLIWLFVVLIITSSYTASL). The Extracellular portion of the chain corresponds to 675–831 (TSILTVQQLN…GDSEQLNVHS (157 aa)). N-linked (GlcNAc...) asparagine glycosylation is found at Asn-738 and Asn-812. The chain crosses the membrane as a helical span at residues 832-852 (FWGMFLVVGIACLVALFIHFF). The Cytoplasmic segment spans residues 853–925 (KIIRDFCKDT…ISRTASRRPI (73 aa)). The segment at 897 to 925 (KRRLKRKRNNDHSMNANSIISRTASRRPI) is disordered. Residues 908–919 (HSMNANSIISRT) show a composition bias toward polar residues.

This sequence belongs to the glutamate-gated ion channel (TC 1.A.10.1) family. In terms of assembly, may form heteromers. Expressed predominantly in roots. Firt detected in the vascular tissues of the cotyledons, and later in the vasculature of all organs. In leaves, preferentially expressed in guard cells.

Its subcellular location is the membrane. Glutamate-gated receptor that probably acts as a non-selective cation channel. May be involved in light-signal transduction and calcium homeostasis via the regulation of calcium influx into cells. Required for the long-term calcium oscillation-regulated stomatal movements. This Arabidopsis thaliana (Mouse-ear cress) protein is Glutamate receptor 3.1 (GLR3.1).